A 130-amino-acid chain; its full sequence is MKVLNNLLYTGDHEWVRVEDNKAYIGISDCAQRMLSDIVFVELPEVDDEIAKGETFATIESVKAASDSYMPVSGTIVEINEELEDNPAALNEDPYGSWIAAIEMSDKNELEELIKPEVYEKICEELDKEA.

Positions 22–103 constitute a Lipoyl-binding domain; that stretch reads KAYIGISDCA…PYGSWIAAIE (82 aa). Lysine 63 bears the N6-lipoyllysine mark.

This sequence belongs to the GcvH family. As to quaternary structure, the glycine cleavage system is composed of four proteins: P, T, L and H. It depends on (R)-lipoate as a cofactor.

Its function is as follows. The glycine cleavage system catalyzes the degradation of glycine. The H protein shuttles the methylamine group of glycine from the P protein to the T protein. The chain is Glycine cleavage system H protein from Clostridium botulinum (strain Okra / Type B1).